The primary structure comprises 85 residues: Progonadoliberin-2 (85 aa).

Residues M1 to A23 form the signal peptide. Q24 bears the Pyrrolidone carboxylic acid mark. G33 is subject to Glycine amide.

This sequence belongs to the GnRH family. In terms of tissue distribution, expressed in only one cell group in the mesencephalon.

The protein resides in the secreted. Its function is as follows. Stimulates the secretion of gonadotropins. This chain is Progonadoliberin-2 (gnrh2), found in Haplochromis burtoni (Burton's mouthbrooder).